A 432-amino-acid polypeptide reads, in one-letter code: MSLSPKQEQLFKQASKHIPGGVNSPVRAFNGVGGTPVFIEKAKGAYLWDVDGKRYVDYVGSWGPMILGHAHPDIIKAVQTAAEDGLSFGAPTVHETTLADIICEIMPSIELVRMTNSGTEATMTAIRLARGYTGRDKIVKFEGCYHGHSDSLLVKAGSGLLTKGEGEPTSKGVPADFAKHTLTLPYNDVAALKECFAKFGHEIAGVIIEPVAGNMNMVKPIDGFLQAIRDVCDEYKSVFIIDEVMTGFRVALGGAQSVYNVKPDLTTLGKIIGAGLPVGAFGGKREIMECIAPLGGVYQAGTLSGNPLAMRAGIEMFKHLRQPDFYSKLSAQLEKLLAGLQAAADEAGIPFKTQQAGAMFGLYFTDQEDITSFDSMLACDIEAFKKFFHGMLKRGVNLAPSAFEAGFISSAHSDEDIEFTIQAAKETFAEMK.

At K270 the chain carries N6-(pyridoxal phosphate)lysine.

The protein belongs to the class-III pyridoxal-phosphate-dependent aminotransferase family. HemL subfamily. Homodimer. Pyridoxal 5'-phosphate serves as cofactor.

It localises to the cytoplasm. The catalysed reaction is (S)-4-amino-5-oxopentanoate = 5-aminolevulinate. The protein operates within porphyrin-containing compound metabolism; protoporphyrin-IX biosynthesis; 5-aminolevulinate from L-glutamyl-tRNA(Glu): step 2/2. The sequence is that of Glutamate-1-semialdehyde 2,1-aminomutase from Acinetobacter baumannii (strain ACICU).